The primary structure comprises 274 residues: 2,3,4,5-tetrahydropyridine-2,6-dicarboxylate N-succinyltransferase (274 aa).

Belongs to the transferase hexapeptide repeat family.

The protein localises to the cytoplasm. The catalysed reaction is (S)-2,3,4,5-tetrahydrodipicolinate + succinyl-CoA + H2O = (S)-2-succinylamino-6-oxoheptanedioate + CoA. It functions in the pathway amino-acid biosynthesis; L-lysine biosynthesis via DAP pathway; LL-2,6-diaminopimelate from (S)-tetrahydrodipicolinate (succinylase route): step 1/3. In Alteromonas mediterranea (strain DSM 17117 / CIP 110805 / LMG 28347 / Deep ecotype), this protein is 2,3,4,5-tetrahydropyridine-2,6-dicarboxylate N-succinyltransferase.